Reading from the N-terminus, the 91-residue chain is Elongation factor 1-beta (91 aa).

This sequence belongs to the EF-1-beta/EF-1-delta family.

Functionally, promotes the exchange of GDP for GTP in EF-1-alpha/GDP, thus allowing the regeneration of EF-1-alpha/GTP that could then be used to form the ternary complex EF-1-alpha/GTP/AAtRNA. In Caldivirga maquilingensis (strain ATCC 700844 / DSM 13496 / JCM 10307 / IC-167), this protein is Elongation factor 1-beta.